The chain runs to 634 residues: Biosynthetic arginine decarboxylase (634 aa).

Lysine 103 bears the N6-(pyridoxal phosphate)lysine mark. A substrate-binding site is contributed by 283–293 (FDVGGGLGVDY).

This sequence belongs to the Orn/Lys/Arg decarboxylase class-II family. SpeA subfamily. Mg(2+) is required as a cofactor. Pyridoxal 5'-phosphate serves as cofactor.

It catalyses the reaction L-arginine + H(+) = agmatine + CO2. Its pathway is amine and polyamine biosynthesis; agmatine biosynthesis; agmatine from L-arginine: step 1/1. In terms of biological role, catalyzes the biosynthesis of agmatine from arginine. The sequence is that of Biosynthetic arginine decarboxylase from Photorhabdus laumondii subsp. laumondii (strain DSM 15139 / CIP 105565 / TT01) (Photorhabdus luminescens subsp. laumondii).